A 990-amino-acid chain; its full sequence is Membrane alanyl aminopeptidase (990 aa).

A signal peptide spans 1-15 (FTIFLGVALLQGVLT). A propeptide spans 16–35 (LSPIPVPEEEWAEFSRMLRD) (activation peptide). Residue N295 is glycosylated (N-linked (GlcNAc...) asparagine). 321–325 (GAMEN) is a substrate binding site. Zn(2+) is bound at residue H357. E358 functions as the Proton acceptor in the catalytic mechanism. Residues H361 and E380 each contribute to the Zn(2+) site. Residues N609, N623, and N752 are each glycosylated (N-linked (GlcNAc...) asparagine). Residue G968 is the site of GPI-anchor amidated glycine attachment. The propeptide at 969-990 (SGNIAALSVVSLLVTLAINMVA) is removed in mature form.

The protein belongs to the peptidase M1 family. Requires Zn(2+) as cofactor. Midgut brush-border membrane.

The protein resides in the cell membrane. Its function is as follows. Binds to the B.thuringiensis toxin, CryIA(C). The chain is Membrane alanyl aminopeptidase from Manduca sexta (Tobacco hawkmoth).